The sequence spans 1442 residues: Trafficking protein particle complex subunit 10 (1442 aa).

A compositionally biased stretch (polar residues) spans 1–23 (MSNVSPNSMNLNGSTSSTASVND). 6 disordered regions span residues 1–86 (MSNV…SSSS), 251–277 (TSSGNNKDKDNDNGGGSSGTGLSTSTK), 535–564 (GSSSSNTPSSTSATTAANGKNTPMPSNSGI), 1208–1238 (LSSSTSPSSATDSSNSNGNNNNNNNNNNHSK), 1316–1335 (QQQQKESNNDNGNEKQQKQQ), and 1422–1442 (LQDNNNNNNNSINSQTSTNKT). Positions 39–86 (SSSSASSISNSNSSSSNNLKPSTQPLSSSSTLNTPTQFSLQHSSSSSS) are enriched in low complexity. Over residues 535–553 (GSSSSNTPSSTSATTAANG) the composition is skewed to low complexity. Over residues 554–564 (KNTPMPSNSGI) the composition is skewed to polar residues. Over residues 1208-1236 (LSSSTSPSSATDSSNSNGNNNNNNNNNNH) the composition is skewed to low complexity. A compositionally biased stretch (low complexity) spans 1425-1442 (NNNNNNNSINSQTSTNKT).

It belongs to the TMEM1 family. In terms of assembly, part of the multisubunit TRAPP (transport protein particle) complex.

It is found in the golgi apparatus. The protein localises to the cis-Golgi network. Its function is as follows. May play a role in vesicular transport from endoplasmic reticulum to Golgi. This chain is Trafficking protein particle complex subunit 10 (trapcc10-1), found in Dictyostelium discoideum (Social amoeba).